The primary structure comprises 128 residues: Glyoxylase-like domain-containing protein (128 aa).

In terms of domain architecture, VOC spans 6–125 (QISGIEIPAT…EGNTHAICTR (120 aa)).

Its pathway is mycotoxin biosynthesis. In terms of biological role, glyoxylase-like domain-containing protein; part of the gene cluster that mediates the biosynthesis of the selective antifungal agent ascochitine, an o-quinone methide that plays a possible protective role against other microbial competitors in nature and is considered to be important for pathogenicity of legume-associated Didymella species. The pathway probably begins with the synthesis of a keto-aldehyde intermediate by the ascochitine non-reducing polyketide synthase pksAC from successive condensations of 4 malonyl-CoA units, presumably with a simple acetyl-CoA starter unit. Release of the keto-aldehyde intermediate is consistent with the presence of the C-terminal reductive release domain. The HR-PKS (orf7) probably makes a diketide starter unit which is passed to the non-reducing polyketide synthase pksAC for further extension, producing ascochital and ascochitine. The aldehyde dehydrogenase (orf1), the 2-oxoglutarate-dependent dioxygenase (orf3) and the dehydrogenase (orf9) are probably involved in subsequent oxidations of methyl groups to the carboxylic acid of the heterocyclic ring. The ascochitine gene cluster also includes a gene encoding a short peptide with a cupin domain (orf2) that is often found in secondary metabolite gene clusters and which function has still to be determined. This Didymella fabae (Leaf and pod spot disease fungus) protein is Glyoxylase-like domain-containing protein.